A 94-amino-acid polypeptide reads, in one-letter code: Co-chaperonin GroES (94 aa).

The protein belongs to the GroES chaperonin family. In terms of assembly, heptamer of 7 subunits arranged in a ring. Interacts with the chaperonin GroEL.

The protein resides in the cytoplasm. In terms of biological role, together with the chaperonin GroEL, plays an essential role in assisting protein folding. The GroEL-GroES system forms a nano-cage that allows encapsulation of the non-native substrate proteins and provides a physical environment optimized to promote and accelerate protein folding. GroES binds to the apical surface of the GroEL ring, thereby capping the opening of the GroEL channel. In Lactiplantibacillus plantarum (strain ATCC BAA-793 / NCIMB 8826 / WCFS1) (Lactobacillus plantarum), this protein is Co-chaperonin GroES.